The sequence spans 475 residues: Putative aldehyde dehydrogenase SH0913 (475 aa).

NAD(+) is bound at residue 201–207 (GDGEGVG). Catalysis depends on residues E245 and C279.

This sequence belongs to the aldehyde dehydrogenase family.

The enzyme catalyses an aldehyde + NAD(+) + H2O = a carboxylate + NADH + 2 H(+). The chain is Putative aldehyde dehydrogenase SH0913 from Staphylococcus haemolyticus (strain JCSC1435).